We begin with the raw amino-acid sequence, 118 residues long: Lutropin subunit beta (118 aa).

6 disulfide bridges follow: C9-C57, C23-C72, C26-C110, C34-C88, C38-C90, and C93-C100. N13 carries an N-linked (GlcNAc...) asparagine glycan.

The protein belongs to the glycoprotein hormones subunit beta family. Heterodimer of a common alpha chain and a unique beta chain which confers biological specificity to thyrotropin, lutropin, follitropin and gonadotropin.

Its subcellular location is the secreted. Its function is as follows. Promotes spermatogenesis and ovulation by stimulating the testes and ovaries to synthesize steroids. In Balaenoptera acutorostrata (Common minke whale), this protein is Lutropin subunit beta (LHB).